Reading from the N-terminus, the 178-residue chain is MHSSALLCCLVFLAGVAASRDASTLSDSSCIHLPTSLPHMLRELRAAFGKVKTFFQMKDQLHSLLLTQSLLDDFKGYLGCQALSEMIQFYLEEVMPQAENHGPDIKEHVNSLGEKLKTLRLRLRRCHRFLPCENKSKAVEKVKRVFSELQERGVYKAMSEFDIFINYIETYMTTKMQK.

The signal sequence occupies residues 1–18 (MHSSALLCCLVFLAGVAA). 2 cysteine pairs are disulfide-bonded: Cys-30–Cys-126 and Cys-80–Cys-132. An N-linked (GlcNAc...) asparagine glycan is attached at Asn-134.

Belongs to the IL-10 family. In terms of assembly, homodimer. Interacts with IL10RA and IL10RB.

The protein localises to the secreted. Its function is as follows. Major immune regulatory cytokine that acts on many cells of the immune system where it has profound anti-inflammatory functions, limiting excessive tissue disruption caused by inflammation. Mechanistically, IL10 binds to its heterotetrameric receptor comprising IL10RA and IL10RB leading to JAK1 and STAT2-mediated phosphorylation of STAT3. In turn, STAT3 translocates to the nucleus where it drives expression of anti-inflammatory mediators. Targets antigen-presenting cells (APCs) such as macrophages and monocytes and inhibits their release of pro-inflammatory cytokines including granulocyte-macrophage colony-stimulating factor /GM-CSF, granulocyte colony-stimulating factor/G-CSF, IL-1 alpha, IL-1 beta, IL-6, IL-8 and TNF-alpha. Also interferes with antigen presentation by reducing the expression of MHC-class II and co-stimulatory molecules, thereby inhibiting their ability to induce T cell activation. In addition, controls the inflammatory response of macrophages by reprogramming essential metabolic pathways including mTOR signaling. This chain is Interleukin-10 (IL10), found in Bos taurus (Bovine).